Consider the following 381-residue polypeptide: Erythronate-4-phosphate dehydrogenase (381 aa).

Residues Ser45 and Thr67 each contribute to the substrate site. NAD(+) contacts are provided by residues Asp148, 207-209 (ASR), and Asp233. Residue Arg209 is part of the active site. The active site involves Glu238. His255 acts as the Proton donor in catalysis. Gly258 contacts NAD(+).

The protein belongs to the D-isomer specific 2-hydroxyacid dehydrogenase family. PdxB subfamily. Homodimer.

Its subcellular location is the cytoplasm. It carries out the reaction 4-phospho-D-erythronate + NAD(+) = (R)-3-hydroxy-2-oxo-4-phosphooxybutanoate + NADH + H(+). Its pathway is cofactor biosynthesis; pyridoxine 5'-phosphate biosynthesis; pyridoxine 5'-phosphate from D-erythrose 4-phosphate: step 2/5. Catalyzes the oxidation of erythronate-4-phosphate to 3-hydroxy-2-oxo-4-phosphonooxybutanoate. The chain is Erythronate-4-phosphate dehydrogenase from Idiomarina loihiensis (strain ATCC BAA-735 / DSM 15497 / L2-TR).